The following is a 194-amino-acid chain: Inosine triphosphate pyrophosphatase (194 aa).

An ITP-binding site is contributed by 10–15 (TSSKKK). Residue glutamate 37 coordinates Mg(2+). Residues lysine 49, 65–66 (DV), lysine 82, 142–145 (FGWD), lysine 166, and 171–172 (HR) each bind ITP.

It belongs to the HAM1 NTPase family. As to quaternary structure, homodimer. It depends on Mg(2+) as a cofactor. Mn(2+) serves as cofactor.

It is found in the cytoplasm. It carries out the reaction ITP + H2O = IMP + diphosphate + H(+). The catalysed reaction is dITP + H2O = dIMP + diphosphate + H(+). It catalyses the reaction XTP + H2O = XMP + diphosphate + H(+). Functionally, pyrophosphatase that hydrolyzes non-canonical purine nucleotides such as inosine triphosphate (ITP), deoxyinosine triphosphate (dITP) or xanthosine 5'-triphosphate (XTP) to their respective monophosphate derivatives. The enzyme does not distinguish between the deoxy- and ribose forms. Probably excludes non-canonical purines from RNA and DNA precursor pools, thus preventing their incorporation into RNA and DNA and avoiding chromosomal lesions. In Giardia intestinalis (strain ATCC 50803 / WB clone C6) (Giardia lamblia), this protein is Inosine triphosphate pyrophosphatase.